The sequence spans 437 residues: Glycogen synthase (437 aa).

Lysine 15 is a binding site for ADP-alpha-D-glucose.

It belongs to the glycosyltransferase 1 family. Bacterial/plant glycogen synthase subfamily.

It carries out the reaction [(1-&gt;4)-alpha-D-glucosyl](n) + ADP-alpha-D-glucose = [(1-&gt;4)-alpha-D-glucosyl](n+1) + ADP + H(+). It participates in glycan biosynthesis; glycogen biosynthesis. Its function is as follows. Synthesizes alpha-1,4-glucan chains using ADP-glucose. The sequence is that of Glycogen synthase from Thermus thermophilus (strain ATCC 27634 / DSM 579 / HB8).